We begin with the raw amino-acid sequence, 303 residues long: D-alanyl-D-alanine carboxypeptidase (303 aa).

Residues 7 to 23 (LLLLLFLIYLGYDYVNE) traverse the membrane as a helical segment. The segment at 37–56 (DQNPKEHLENSGTSENTQEK) is disordered. Residues 154-156 (YAL) and S161 each bind substrate. 2 residues coordinate Zn(2+): H163 and D170. E213 functions as the Proton donor/acceptor in the catalytic mechanism. Residue H216 coordinates Zn(2+).

Belongs to the peptidase M15B family. Requires Zn(2+) as cofactor.

Its subcellular location is the cell membrane. The DD-carboxypeptidase activity is not inhibited by beta-lactam antibiotics. Its function is as follows. Cleaves the C-terminal D-alanine residue of UDP-muramyl-pentapeptide (UDP-MurNAc-L-Ala-D-Glu-mDAP-D-Ala-D-Ala) or diacetyl-L-Lys-D-Ala-D-Ala. However the physiological substrate likely contains L-Lys instead of mDAP at the third position of the pentapeptide. Also releases the C-terminal D-lactate from UDP-MurNAc-L-Ala-D-Glu-mDAP-D-Ala-D-lactate, a depsipeptide produced by the vancomycin resistance protein VanA. Therefore, VanY should contribute in vivo to the hydrolysis of both the D-alanyl-D-alanine- and the depsipeptide-containing peptidoglycan precursors. Is not necessary for vancomycin resistance of E.faecium BM4147 and perhaps not W14-9. Does not display transpeptidase or beta-lactamase activities. This Enterococcus faecium (Streptococcus faecium) protein is D-alanyl-D-alanine carboxypeptidase.